A 2491-amino-acid polypeptide reads, in one-letter code: Cation-independent mannose-6-phosphate receptor (2491 aa).

Residues 1–40 form the signal peptide; the sequence is MGAAAGRSPHLGPAPARRPQRSLLLLQLLLLVAAPGSTQA. Over 41 to 2304 the chain is Lumenal; the sequence is QAAPFPELCS…MHKGLSERSQ (2264 aa). MRH domains lie at 47 to 163, 172 to 320, 326 to 468, 473 to 619, 625 to 762, 765 to 924, 932 to 1079, 1082 to 1219, 1225 to 1363, 1367 to 1508, 1514 to 1648, and 1650 to 1797; these read ELCS…ACKK, VPCY…ACHR, KTCS…ACVK, LLCG…ACVL, ENCT…ACPE, LECV…ACPI, QACS…ACVP, VDCQ…ACPV, DNCE…ACPP, TECS…ACPM, DDCQ…ACEQ, and TECS…VCPD. 2 cysteine pairs are disulfide-bonded: Cys49/Cys69 and Cys77/Cys84. Asn112 carries an N-linked (GlcNAc...) asparagine glycan. 8 disulfide bridges follow: Cys117–Cys149, Cys134–Cys161, Cys174–Cys212, Cys228–Cys235, Cys275–Cys306, Cys288–Cys318, Cys328–Cys366, and Cys374–Cys382. N-linked (GlcNAc...) asparagine glycosylation is found at Asn400 and Asn435. Disulfide bonds link Cys420-Cys454, Cys434-Cys466, Cys475-Cys519, and Cys531-Cys538. N-linked (GlcNAc...) asparagine glycans are attached at residues Asn543 and Asn581. 2 disulfide bridges follow: Cys572-Cys605 and Cys586-Cys617. Asn626 carries an N-linked (GlcNAc...) asparagine glycan. Intrachain disulfides connect Cys627–Cys664, Cys672–Cys679, Cys731–Cys760, Cys767–Cys814, and Cys823–Cys830. Asn747 is a glycosylation site (N-linked (GlcNAc...) asparagine). N-linked (GlcNAc...) asparagine glycosylation is present at Asn871. Intrachain disulfides connect Cys875-Cys910, Cys893-Cys922, Cys934-Cys970, Cys976-Cys987, Cys1042-Cys1077, Cys1084-Cys1125, and Cys1134-Cys1142. 2 N-linked (GlcNAc...) asparagine glycosylation sites follow: Asn951 and Asn957. A glycan (N-linked (GlcNAc...) asparagine) is linked at Asn1164. 4 disulfide bridges follow: Cys1177/Cys1205, Cys1190/Cys1217, Cys1227/Cys1262, and Cys1270/Cys1282. Asn1246 carries an N-linked (GlcNAc...) asparagine glycan. N-linked (GlcNAc...) asparagine glycosylation occurs at Asn1312. Disulfide bonds link Cys1319/Cys1349, Cys1333/Cys1361, Cys1369/Cys1408, Cys1420/Cys1427, Cys1461/Cys1494, Cys1476/Cys1506, Cys1516/Cys1553, Cys1559/Cys1566, Cys1598/Cys1634, Cys1614/Cys1646, Cys1652/Cys1695, Cys1706/Cys1713, Cys1750/Cys1783, Cys1766/Cys1795, Cys1804/Cys1839, Cys1850/Cys1856, Cys1893/Cys1975, Cys1903/Cys1927, Cys1917/Cys1942, Cys1957/Cys1987, Cys1994/Cys2029, Cys2039/Cys2046, Cys2082/Cys2113, and Cys2096/Cys2125. Asn1656 carries an N-linked (GlcNAc...) asparagine glycan. Asn1757 carries an N-linked (GlcNAc...) asparagine glycan. In terms of domain architecture, Fibronectin type-II spans 1802–1989; sequence DGCTLTDEQL…EWKTKVVCPP (188 aa). A glycan (N-linked (GlcNAc...) asparagine) is linked at Asn1816. MRH domains follow at residues 1992–2127 and 2135–2280; these read LECK…ACAV and VNGT…VCPL. Asn2085 is a glycosylation site (N-linked (GlcNAc...) asparagine). Residue Asn2136 is glycosylated (N-linked (GlcNAc...) asparagine). Disulfide bonds link Cys2188–Cys2194, Cys2232–Cys2266, and Cys2248–Cys2278. The helical transmembrane segment at 2305-2327 threads the bilayer; the sequence is AVGAVLSLLLVALTCCLLALLLY. Topologically, residues 2328-2491 are cytoplasmic; sequence KKERRETVIS…DDSDEDLLHI (164 aa). N6-acetyllysine is present on Lys2352. Phosphoserine is present on Ser2409. The segment at 2424 to 2491 is disordered; that stretch reads GRGAGAESSH…DDSDEDLLHI (68 aa). Arg2425 carries the omega-N-methylarginine modification. The segment covering 2444–2459 has biased composition (basic and acidic residues); it reads QEREDDRVGLVRGEKA. The segment covering 2464–2477 has biased composition (polar residues); it reads SSSAQQKTVSSTKL. Ser2479 and Ser2484 each carry phosphoserine. A compositionally biased stretch (basic and acidic residues) spans 2479–2491; sequence SFHDDSDEDLLHI.

It belongs to the MRL1/IGF2R family. Binds HA-I and HA-II plasma membrane adapters. Interacts with DPP4; the interaction is direct. Binds GGA1, GGA2 and GGA3. Interacts with the heterotrimeric retromer cargo-selective complex (CSC), formed by VPS26 (VPS26A or VPS26B), VPS29 and VPS35; which is involved in retrograde trafficking of the receptor from endosomes to the Golgi apparatus. Palmitoylated. Undergoes cysteine S-palmitoylation which promotes interaction with the retromer cargo-selective complex which mediates its retrograde trafficking to the Golgi apparatus.

Its subcellular location is the golgi apparatus membrane. The protein localises to the endosome membrane. In terms of biological role, mediates the transport of phosphorylated lysosomal enzymes from the Golgi complex and the cell surface to lysosomes. Lysosomal enzymes bearing phosphomannosyl residues bind specifically to mannose-6-phosphate receptors in the Golgi apparatus and the resulting receptor-ligand complex is transported to an acidic prelysosomal compartment where the low pH mediates the dissociation of the complex. The receptor is then recycled back to the Golgi for another round of trafficking through its binding to the retromer. This receptor also binds IGF2. Acts as a positive regulator of T-cell coactivation by binding DPP4. The sequence is that of Cation-independent mannose-6-phosphate receptor (IGF2R) from Homo sapiens (Human).